A 382-amino-acid chain; its full sequence is Dual-specificity RNA methyltransferase RlmN (382 aa).

Residue E96 is the Proton acceptor of the active site. Residues 102–342 enclose the Radical SAM core domain; that stretch reads QGKRGTLCVS…VRTTRGEDID (241 aa). C109 and C345 are oxidised to a cystine. Residues C116, C120, and C123 each coordinate [4Fe-4S] cluster. S-adenosyl-L-methionine-binding positions include 170 to 171, S202, 224 to 226, and N302; these read GE and SLH. C345 (S-methylcysteine intermediate) is an active-site residue.

This sequence belongs to the radical SAM superfamily. RlmN family. [4Fe-4S] cluster is required as a cofactor.

The protein localises to the cytoplasm. The enzyme catalyses adenosine(2503) in 23S rRNA + 2 reduced [2Fe-2S]-[ferredoxin] + 2 S-adenosyl-L-methionine = 2-methyladenosine(2503) in 23S rRNA + 5'-deoxyadenosine + L-methionine + 2 oxidized [2Fe-2S]-[ferredoxin] + S-adenosyl-L-homocysteine. It catalyses the reaction adenosine(37) in tRNA + 2 reduced [2Fe-2S]-[ferredoxin] + 2 S-adenosyl-L-methionine = 2-methyladenosine(37) in tRNA + 5'-deoxyadenosine + L-methionine + 2 oxidized [2Fe-2S]-[ferredoxin] + S-adenosyl-L-homocysteine. Functionally, specifically methylates position 2 of adenine 2503 in 23S rRNA and position 2 of adenine 37 in tRNAs. m2A2503 modification seems to play a crucial role in the proofreading step occurring at the peptidyl transferase center and thus would serve to optimize ribosomal fidelity. In Pseudomonas savastanoi pv. phaseolicola (strain 1448A / Race 6) (Pseudomonas syringae pv. phaseolicola (strain 1448A / Race 6)), this protein is Dual-specificity RNA methyltransferase RlmN.